The primary structure comprises 957 residues: Thioredoxin domain-containing protein 11 (957 aa).

Gly residues predominate over residues M1 to S13. The segment at M1 to L47 is disordered. The span at S32–E44 shows a compositional bias: low complexity. The helical transmembrane segment at L64–S84 threads the bilayer. A Thioredoxin 1 domain is found at I91–K213. Cystine bridges form between C441–C444 and C691–C694. The 151-residue stretch at L621 to D771 folds into the Thioredoxin 2 domain. A coiled-coil region spans residues A785–E889. Positions L904–E925 are enriched in basic and acidic residues. The tract at residues L904–D957 is disordered. The span at N941–S951 shows a compositional bias: polar residues.

Belongs to the protein disulfide isomerase family. In terms of assembly, interacts with the cytoplasmic part of DUOX1 and DUOX2. Interacts with TPO and CYBA.

Its subcellular location is the endoplasmic reticulum membrane. In terms of biological role, may act as a redox regulator involved in DUOX proteins folding. The interaction with DUOX1 and DUOX2 suggest that it belongs to a multiprotein complex constituting the thyroid H(2)O(2) generating system. It is however not sufficient to assist DUOX1 and DUOX2 in H(2)O(2) generation. This is Thioredoxin domain-containing protein 11 (TXNDC11) from Bos taurus (Bovine).